Reading from the N-terminus, the 439-residue chain is Proline--tRNA ligase (439 aa).

Belongs to the class-II aminoacyl-tRNA synthetase family. ProS type 2 subfamily. As to quaternary structure, homodimer.

It is found in the cytoplasm. It catalyses the reaction tRNA(Pro) + L-proline + ATP = L-prolyl-tRNA(Pro) + AMP + diphosphate. In terms of biological role, catalyzes the attachment of proline to tRNA(Pro) in a two-step reaction: proline is first activated by ATP to form Pro-AMP and then transferred to the acceptor end of tRNA(Pro). The protein is Proline--tRNA ligase of Rhodopseudomonas palustris (strain BisB18).